The chain runs to 265 residues: Homeobox protein CDX-1 (265 aa).

Residues 9 to 153 are disordered; it reads KDSPVYPGPA…GGGGSGKTRT (145 aa). Positions 30-42 are enriched in pro residues; that stretch reads YGPPAPPPAPPQY. Over residues 73 to 92 the composition is skewed to low complexity; sequence AAAYGPGPAAPAASPASLAF. Residues 93 to 108 show a composition bias toward pro residues; it reads GPPPDFSPVPAPPGPG. Low complexity predominate over residues 110–126; the sequence is GLLAQPLGGPGTPSSPG. The segment at residues 154 to 213 is a DNA-binding region (homeobox); the sequence is KDKYRVVYTDHQRLELEKEFHYSRYITIRRKSELAANLGLTERQVKIWFQNRRAKERKVN. The segment at 157-178 is interaction with DNA; it reads YRVVYTDHQRLELEKEFHYSRY. The interaction with 5-mCpG DNA stretch occupies residues 196-207; it reads RQVKIWFQNRRA. Basic residues predominate over residues 207-217; the sequence is AKERKVNKKKQ. A disordered region spans residues 207–265; sequence AKERKVNKKKQQQQQPPQPPMAHDITATPAGPSLGGLCPSNTSLLATSSPMPVKEEFLP. A compositionally biased stretch (polar residues) spans 245–256; it reads PSNTSLLATSSP.

This sequence belongs to the Caudal homeobox family. In terms of tissue distribution, intestinal epithelium.

Its subcellular location is the nucleus. Its function is as follows. Plays a role in transcriptional regulation. Involved in activated KRAS-mediated transcriptional activation of PRKD1 in colorectal cancer (CRC) cells. Binds to the PRKD1 promoter in colorectal cancer (CRC) cells. Could play a role in the terminal differentiation of the intestine. Binds preferentially to methylated DNA. The protein is Homeobox protein CDX-1 (CDX1) of Homo sapiens (Human).